Here is a 130-residue protein sequence, read N- to C-terminus: Phosphoribosyl-AMP cyclohydrolase (130 aa).

D74 serves as a coordination point for Mg(2+). C75 contributes to the Zn(2+) binding site. 2 residues coordinate Mg(2+): D76 and D78. Positions 91 and 98 each coordinate Zn(2+).

It belongs to the PRA-CH family. Homodimer. Mg(2+) serves as cofactor. It depends on Zn(2+) as a cofactor.

The protein resides in the cytoplasm. The enzyme catalyses 1-(5-phospho-beta-D-ribosyl)-5'-AMP + H2O = 1-(5-phospho-beta-D-ribosyl)-5-[(5-phospho-beta-D-ribosylamino)methylideneamino]imidazole-4-carboxamide. The protein operates within amino-acid biosynthesis; L-histidine biosynthesis; L-histidine from 5-phospho-alpha-D-ribose 1-diphosphate: step 3/9. Functionally, catalyzes the hydrolysis of the adenine ring of phosphoribosyl-AMP. The chain is Phosphoribosyl-AMP cyclohydrolase from Bradyrhizobium sp. (strain ORS 278).